The following is a 323-amino-acid chain: o-succinylbenzoate synthase (323 aa).

K134 serves as the catalytic Proton donor. Residues D162, E191, and D214 each contribute to the Mg(2+) site. K236 (proton acceptor) is an active-site residue.

The protein belongs to the mandelate racemase/muconate lactonizing enzyme family. MenC type 1 subfamily. A divalent metal cation is required as a cofactor.

It catalyses the reaction (1R,6R)-6-hydroxy-2-succinyl-cyclohexa-2,4-diene-1-carboxylate = 2-succinylbenzoate + H2O. Its pathway is quinol/quinone metabolism; 1,4-dihydroxy-2-naphthoate biosynthesis; 1,4-dihydroxy-2-naphthoate from chorismate: step 4/7. It functions in the pathway quinol/quinone metabolism; menaquinone biosynthesis. Its function is as follows. Converts 2-succinyl-6-hydroxy-2,4-cyclohexadiene-1-carboxylate (SHCHC) to 2-succinylbenzoate (OSB). This Proteus mirabilis (strain HI4320) protein is o-succinylbenzoate synthase.